The following is a 58-amino-acid chain: Large ribosomal subunit protein eL24 (58 aa).

C6, C9, C32, and C36 together coordinate Zn(2+). Residues 6 to 36 (CSFCGYDIEPGTGKMYVRRDGRVFYFCSGKC) form a C4-type zinc finger.

Belongs to the eukaryotic ribosomal protein eL24 family. As to quaternary structure, part of the 50S ribosomal subunit. Forms a cluster with proteins L3 and L14. The cofactor is Zn(2+).

Its function is as follows. Binds to the 23S rRNA. The chain is Large ribosomal subunit protein eL24 from Archaeoglobus fulgidus (strain ATCC 49558 / DSM 4304 / JCM 9628 / NBRC 100126 / VC-16).